Consider the following 658-residue polypeptide: DNA ligase (658 aa).

Residues 31–35 (DFEYD), 80–81 (SL), and Glu110 each bind NAD(+). Lys112 (N6-AMP-lysine intermediate) is an active-site residue. 4 residues coordinate NAD(+): Arg133, Glu167, Lys279, and Lys303. Zn(2+)-binding residues include Cys397, Cys400, Cys415, and Cys420. The 71-residue stretch at 584–654 (DTASIYFQKS…KALNIPIINE (71 aa)) folds into the BRCT domain.

This sequence belongs to the NAD-dependent DNA ligase family. LigA subfamily. Mg(2+) is required as a cofactor. Mn(2+) serves as cofactor.

The enzyme catalyses NAD(+) + (deoxyribonucleotide)n-3'-hydroxyl + 5'-phospho-(deoxyribonucleotide)m = (deoxyribonucleotide)n+m + AMP + beta-nicotinamide D-nucleotide.. Its function is as follows. DNA ligase that catalyzes the formation of phosphodiester linkages between 5'-phosphoryl and 3'-hydroxyl groups in double-stranded DNA using NAD as a coenzyme and as the energy source for the reaction. It is essential for DNA replication and repair of damaged DNA. This chain is DNA ligase, found in Mycoplasma pneumoniae (strain ATCC 29342 / M129 / Subtype 1) (Mycoplasmoides pneumoniae).